The primary structure comprises 214 residues: Zinc finger protein 11 (214 aa).

A disordered region spans residues 1 to 27 (MKRTHLASFSNRDKTQEEEGEDGNGDN). The segment at 49-71 (YTCSFCRREFRSAQALGGHMNVH) adopts a C2H2-type zinc-finger fold. Positions 72 to 79 (RRDRAKLR) match the Nuclear localization signal motif. Residues 89-130 (HHHTPIANPNPNFSSSSSSSTTTAHLEPSLTNQRSKTTPFPS) are disordered. Residues 102 to 111 (SSSSSSSTTT) show a composition bias toward low complexity. The segment covering 117–128 (SLTNQRSKTTPF) has biased composition (polar residues).

In terms of tissue distribution, expressed in roots, stems, axillary buds and flowers.

The protein localises to the nucleus. Functionally, probable transcription factor that may regulate cell division and growth. This Arabidopsis thaliana (Mouse-ear cress) protein is Zinc finger protein 11.